The following is a 250-amino-acid chain: MPKTINNYNRFLPVVHFSQTELEESLCNAVIHNDKKAAEIAIFKLNISDNFTSDLRTNKSYIDDTHNIFIGDSLPLVAVKNNNLDMLKMLLSCGFEPNTPAAANCYTPLWYVTYKGYTNSVRKLLEYPINNINETFGKETPLKSALIHKHTEIAKLLIDKINPDKFLFNGVENIALLAHDQFMFIINEISTDKKISLFKLCSKNITEHQDFILFGKGEAEINNMHINNTYMLDYLDNNHDDSTTIIGSID.

3 ANK repeats span residues 70–99 (IGDS…EPNT), 104–134 (NCYT…NINE), and 137–166 (GKET…PDKF).

The polypeptide is Putative ankyrin repeat protein RBE_0623 (Rickettsia bellii (strain RML369-C)).